We begin with the raw amino-acid sequence, 515 residues long: 2,3-bisphosphoglycerate-independent phosphoglycerate mutase (515 aa).

Mn(2+) is bound by residues Asp14 and Ser64. Ser64 functions as the Phosphoserine intermediate in the catalytic mechanism. Residues His125, 155–156, Arg187, Arg193, 263–266, and Lys337 contribute to the substrate site; these read RD and RADR. Residues Asp404, His408, Asp445, His446, and His464 each contribute to the Mn(2+) site.

Belongs to the BPG-independent phosphoglycerate mutase family. Monomer. Mn(2+) is required as a cofactor.

The enzyme catalyses (2R)-2-phosphoglycerate = (2R)-3-phosphoglycerate. It participates in carbohydrate degradation; glycolysis; pyruvate from D-glyceraldehyde 3-phosphate: step 3/5. Functionally, catalyzes the interconversion of 2-phosphoglycerate and 3-phosphoglycerate. This chain is 2,3-bisphosphoglycerate-independent phosphoglycerate mutase, found in Pseudomonas aeruginosa (strain ATCC 15692 / DSM 22644 / CIP 104116 / JCM 14847 / LMG 12228 / 1C / PRS 101 / PAO1).